A 146-amino-acid polypeptide reads, in one-letter code: 3-hydroxyacyl-[acyl-carrier-protein] dehydratase FabZ (146 aa).

Residue His-49 is part of the active site.

This sequence belongs to the thioester dehydratase family. FabZ subfamily.

It is found in the cytoplasm. The catalysed reaction is a (3R)-hydroxyacyl-[ACP] = a (2E)-enoyl-[ACP] + H2O. Involved in unsaturated fatty acids biosynthesis. Catalyzes the dehydration of short chain beta-hydroxyacyl-ACPs and long chain saturated and unsaturated beta-hydroxyacyl-ACPs. This chain is 3-hydroxyacyl-[acyl-carrier-protein] dehydratase FabZ, found in Azotobacter vinelandii (strain DJ / ATCC BAA-1303).